The primary structure comprises 376 residues: UPF0284 protein glr4139 (376 aa).

It belongs to the UPF0284 family.

The protein is UPF0284 protein glr4139 of Gloeobacter violaceus (strain ATCC 29082 / PCC 7421).